Reading from the N-terminus, the 295-residue chain is Ribosomal protein L11 methyltransferase (295 aa).

S-adenosyl-L-methionine-binding residues include Thr-146, Gly-167, Asp-189, and Asn-231.

It belongs to the methyltransferase superfamily. PrmA family.

The protein resides in the cytoplasm. The enzyme catalyses L-lysyl-[protein] + 3 S-adenosyl-L-methionine = N(6),N(6),N(6)-trimethyl-L-lysyl-[protein] + 3 S-adenosyl-L-homocysteine + 3 H(+). Its function is as follows. Methylates ribosomal protein L11. The polypeptide is Ribosomal protein L11 methyltransferase (Vibrio vulnificus (strain YJ016)).